The primary structure comprises 99 residues: Aspartyl/glutamyl-tRNA(Asn/Gln) amidotransferase subunit C (99 aa).

The protein belongs to the GatC family. As to quaternary structure, heterotrimer of A, B and C subunits.

It carries out the reaction L-glutamyl-tRNA(Gln) + L-glutamine + ATP + H2O = L-glutaminyl-tRNA(Gln) + L-glutamate + ADP + phosphate + H(+). The enzyme catalyses L-aspartyl-tRNA(Asn) + L-glutamine + ATP + H2O = L-asparaginyl-tRNA(Asn) + L-glutamate + ADP + phosphate + 2 H(+). Functionally, allows the formation of correctly charged Asn-tRNA(Asn) or Gln-tRNA(Gln) through the transamidation of misacylated Asp-tRNA(Asn) or Glu-tRNA(Gln) in organisms which lack either or both of asparaginyl-tRNA or glutaminyl-tRNA synthetases. The reaction takes place in the presence of glutamine and ATP through an activated phospho-Asp-tRNA(Asn) or phospho-Glu-tRNA(Gln). The sequence is that of Aspartyl/glutamyl-tRNA(Asn/Gln) amidotransferase subunit C from Ralstonia pickettii (strain 12J).